Here is a 231-residue protein sequence, read N- to C-terminus: MDARQMKIKAAEAALEHVENGMRLGIGTGSTAEEFVRVLAEKVASGFQISGVPTSERTARLCLELGVPLKSLDELPELDLTIDGADEVDGKLRLIKGGGGALLREKIVASASARMIVIADETKVVDVLGAFKLPIEVNPFGQLATRLAIEKVASRLGLTGDIVVRASGDGPFMTDGGHLILDASFGRIPDADALAVELNAIPGVVEHGLFIEMASMAIIAGPEGARTLKAS.

Substrate-binding positions include 28–31 (TGST), 83–86 (DGAD), and 96–99 (KGGG). The active-site Proton acceptor is Glu-105. Lys-123 serves as a coordination point for substrate.

Belongs to the ribose 5-phosphate isomerase family. As to quaternary structure, homodimer.

The catalysed reaction is aldehydo-D-ribose 5-phosphate = D-ribulose 5-phosphate. It participates in carbohydrate degradation; pentose phosphate pathway; D-ribose 5-phosphate from D-ribulose 5-phosphate (non-oxidative stage): step 1/1. Catalyzes the reversible conversion of ribose-5-phosphate to ribulose 5-phosphate. The protein is Ribose-5-phosphate isomerase A of Sinorhizobium medicae (strain WSM419) (Ensifer medicae).